Here is a 459-residue protein sequence, read N- to C-terminus: Methylenetetrahydrofolate--tRNA-(uracil-5-)-methyltransferase TrmFO (459 aa).

FAD is bound at residue Gly26–Gly31.

The protein belongs to the MnmG family. TrmFO subfamily. FAD is required as a cofactor.

Its subcellular location is the cytoplasm. It carries out the reaction uridine(54) in tRNA + (6R)-5,10-methylene-5,6,7,8-tetrahydrofolate + NADH + H(+) = 5-methyluridine(54) in tRNA + (6S)-5,6,7,8-tetrahydrofolate + NAD(+). The catalysed reaction is uridine(54) in tRNA + (6R)-5,10-methylene-5,6,7,8-tetrahydrofolate + NADPH + H(+) = 5-methyluridine(54) in tRNA + (6S)-5,6,7,8-tetrahydrofolate + NADP(+). Its function is as follows. Catalyzes the folate-dependent formation of 5-methyl-uridine at position 54 (M-5-U54) in all tRNAs. This is Methylenetetrahydrofolate--tRNA-(uracil-5-)-methyltransferase TrmFO from Synechococcus sp. (strain JA-2-3B'a(2-13)) (Cyanobacteria bacterium Yellowstone B-Prime).